A 233-amino-acid polypeptide reads, in one-letter code: Phosphoribosylformylglycinamidine synthase subunit PurQ (233 aa).

Positions 3-233 (SAVLVFPGIN…GLAQHLAKAA (231 aa)) constitute a Glutamine amidotransferase type-1 domain. C87 functions as the Nucleophile in the catalytic mechanism. Residues H204 and E206 contribute to the active site.

In terms of assembly, part of the FGAM synthase complex composed of 1 PurL, 1 PurQ and 2 PurS subunits.

The protein resides in the cytoplasm. It catalyses the reaction N(2)-formyl-N(1)-(5-phospho-beta-D-ribosyl)glycinamide + L-glutamine + ATP + H2O = 2-formamido-N(1)-(5-O-phospho-beta-D-ribosyl)acetamidine + L-glutamate + ADP + phosphate + H(+). The enzyme catalyses L-glutamine + H2O = L-glutamate + NH4(+). It participates in purine metabolism; IMP biosynthesis via de novo pathway; 5-amino-1-(5-phospho-D-ribosyl)imidazole from N(2)-formyl-N(1)-(5-phospho-D-ribosyl)glycinamide: step 1/2. Part of the phosphoribosylformylglycinamidine synthase complex involved in the purines biosynthetic pathway. Catalyzes the ATP-dependent conversion of formylglycinamide ribonucleotide (FGAR) and glutamine to yield formylglycinamidine ribonucleotide (FGAM) and glutamate. The FGAM synthase complex is composed of three subunits. PurQ produces an ammonia molecule by converting glutamine to glutamate. PurL transfers the ammonia molecule to FGAR to form FGAM in an ATP-dependent manner. PurS interacts with PurQ and PurL and is thought to assist in the transfer of the ammonia molecule from PurQ to PurL. In Rhodopseudomonas palustris (strain ATCC BAA-98 / CGA009), this protein is Phosphoribosylformylglycinamidine synthase subunit PurQ.